A 193-amino-acid polypeptide reads, in one-letter code: Protein PATRONUS 1 (193 aa).

Residues 14–16 (DEN) carry the DEN-box motif. The D-box motif lies at 46 to 49 (RKAL).

As to quaternary structure, interacts directly with the anaphase promoting complex/cyclosome (APC/C) through the CDC27B and CDC20-1 subunits. Expressed in somatic and reproductive tissues. Expressed in inflorescence, young buds, roots and basal portion of young leaves. Expressed in proliferating cells such as apical meristems of roots and shoots, expanding cotyledons and leaves, root vascular tissues, and in stomatal precursor cells.

The protein localises to the nucleus. It is found in the cytoplasm. Required for the maintenance of centromeric cohesion during interkinesis, until meiosis II. Required for regular configuration and segregation of sister chromatids in meiosis II. Also required for centromere cohesion during meiosis I. Involved in spindle organization at the end of telophase I and in meiosis II. Required to prevent precocious release of pericentromeric cohesins during meiosis, but not for cohesion establishment and monopolar orientation of kinetochores at meiosis I. Involved also in somatic development. Regulates mitotic cell division and ploidy stability in somatic cell types. May be involved in the organization of microtubules dynamics. Involved in abiotic stresses and mono- or divalent ions tolerance and may play a role in maintaining meristematic activity under saline conditions. PANS1 and GIG1 are part of a network linking centromere cohesion and cell cycle progression through control of APC/C activity. Regulates the number of dividing cells in root meristem and is necessary for the anaphase onset control through an APC/C-mediated pathway. Involved in maintaining correct chromosome arm cohesion under stress conditions. This is Protein PATRONUS 1 from Arabidopsis thaliana (Mouse-ear cress).